Here is a 143-residue protein sequence, read N- to C-terminus: Transcriptional regulator MraZ (143 aa).

SpoVT-AbrB domains are found at residues 5–47 and 76–119; these read EFDH…TLEE and AVEV…DRET.

This sequence belongs to the MraZ family. As to quaternary structure, forms oligomers.

The protein localises to the cytoplasm. It is found in the nucleoid. The polypeptide is Transcriptional regulator MraZ (Staphylococcus epidermidis (strain ATCC 35984 / DSM 28319 / BCRC 17069 / CCUG 31568 / BM 3577 / RP62A)).